A 128-amino-acid chain; its full sequence is Small ribosomal subunit protein eS8 (128 aa).

It belongs to the eukaryotic ribosomal protein eS8 family. In terms of assembly, part of the 30S ribosomal subunit.

The protein is Small ribosomal subunit protein eS8 of Methanococcus maripaludis (strain C6 / ATCC BAA-1332).